Reading from the N-terminus, the 322-residue chain is Malate dehydrogenase (322 aa).

Residues 10-15 (GSGQIG) and D34 contribute to the NAD(+) site. The substrate site is built by R83 and R89. NAD(+) is bound by residues N96 and 119 to 121 (ITN). Residues N121 and R152 each contribute to the substrate site. Residue H176 is the Proton acceptor of the active site.

This sequence belongs to the LDH/MDH superfamily. MDH type 3 family.

The catalysed reaction is (S)-malate + NAD(+) = oxaloacetate + NADH + H(+). In terms of biological role, catalyzes the reversible oxidation of malate to oxaloacetate. In Bradyrhizobium sp. (strain ORS 278), this protein is Malate dehydrogenase.